Reading from the N-terminus, the 121-residue chain is Large ribosomal subunit protein uL18 (121 aa).

Belongs to the universal ribosomal protein uL18 family. Part of the 50S ribosomal subunit; part of the 5S rRNA/L5/L18/L25 subcomplex. Contacts the 5S and 23S rRNAs.

Its function is as follows. This is one of the proteins that bind and probably mediate the attachment of the 5S RNA into the large ribosomal subunit, where it forms part of the central protuberance. This chain is Large ribosomal subunit protein uL18, found in Polaromonas sp. (strain JS666 / ATCC BAA-500).